The sequence spans 105 residues: Large ribosomal subunit protein eL36 (105 aa).

The protein belongs to the eukaryotic ribosomal protein eL36 family. As to quaternary structure, component of the large ribosomal subunit.

Its subcellular location is the cytoplasm. The protein localises to the cytosol. Functionally, component of the large ribosomal subunit. The ribosome is a large ribonucleoprotein complex responsible for the synthesis of proteins in the cell. The polypeptide is Large ribosomal subunit protein eL36 (rpl36) (Xenopus laevis (African clawed frog)).